The sequence spans 74 residues: UPF0435 protein GTNG_0390 (74 aa).

The protein belongs to the UPF0435 family.

The sequence is that of UPF0435 protein GTNG_0390 from Geobacillus thermodenitrificans (strain NG80-2).